A 701-amino-acid chain; its full sequence is DNA ligase (701 aa).

NAD(+) is bound by residues 50–54 (DYEYD), 99–100 (SL), and Glu130. Lys132 (N6-AMP-lysine intermediate) is an active-site residue. NAD(+) contacts are provided by Arg153, Glu187, Lys301, and Lys325. The Zn(2+) site is built by Cys419, Cys422, Cys437, and Cys442. Residues 626–701 (NEHQKYMNKT…EIITEPFWDN (76 aa)) form the BRCT domain.

This sequence belongs to the NAD-dependent DNA ligase family. LigA subfamily. It depends on Mg(2+) as a cofactor. The cofactor is Mn(2+).

The enzyme catalyses NAD(+) + (deoxyribonucleotide)n-3'-hydroxyl + 5'-phospho-(deoxyribonucleotide)m = (deoxyribonucleotide)n+m + AMP + beta-nicotinamide D-nucleotide.. DNA ligase that catalyzes the formation of phosphodiester linkages between 5'-phosphoryl and 3'-hydroxyl groups in double-stranded DNA using NAD as a coenzyme and as the energy source for the reaction. It is essential for DNA replication and repair of damaged DNA. This chain is DNA ligase, found in Malacoplasma penetrans (strain HF-2) (Mycoplasma penetrans).